The primary structure comprises 235 residues: Large ribosomal subunit protein uL1 (235 aa).

The protein belongs to the universal ribosomal protein uL1 family. As to quaternary structure, part of the 50S ribosomal subunit.

Binds directly to 23S rRNA. The L1 stalk is quite mobile in the ribosome, and is involved in E site tRNA release. Functionally, protein L1 is also a translational repressor protein, it controls the translation of the L11 operon by binding to its mRNA. The sequence is that of Large ribosomal subunit protein uL1 from Prochlorococcus marinus (strain MIT 9215).